Here is a 322-residue protein sequence, read N- to C-terminus: 4-hydroxythreonine-4-phosphate dehydrogenase (322 aa).

2 residues coordinate substrate: histidine 131 and threonine 132. A divalent metal cation-binding residues include histidine 161, histidine 206, and histidine 259. 3 residues coordinate substrate: lysine 267, asparagine 276, and arginine 285.

Belongs to the PdxA family. Homodimer. A divalent metal cation is required as a cofactor.

It is found in the cytoplasm. It carries out the reaction 4-(phosphooxy)-L-threonine + NAD(+) = 3-amino-2-oxopropyl phosphate + CO2 + NADH. It functions in the pathway cofactor biosynthesis; pyridoxine 5'-phosphate biosynthesis; pyridoxine 5'-phosphate from D-erythrose 4-phosphate: step 4/5. Catalyzes the NAD(P)-dependent oxidation of 4-(phosphooxy)-L-threonine (HTP) into 2-amino-3-oxo-4-(phosphooxy)butyric acid which spontaneously decarboxylates to form 3-amino-2-oxopropyl phosphate (AHAP). The chain is 4-hydroxythreonine-4-phosphate dehydrogenase from Sulfurihydrogenibium sp. (strain YO3AOP1).